Reading from the N-terminus, the 67-residue chain is Metallothionein-B (67 aa).

This sequence belongs to the metallothionein superfamily. Type 4 family.

Functionally, metallothioneins have a high content of cysteine residues that bind various heavy metals. This is Metallothionein-B from Sphaerechinus granularis (Purple sea urchin).